The sequence spans 354 residues: Rhodopsin (354 aa).

The Extracellular portion of the chain corresponds to 1 to 36 (MNGTEGENFYVPMSNKTGVVRSPFDYPQYYLGEPWM). Residues N2 and N15 are each glycosylated (N-linked (GlcNAc...) asparagine). A helical transmembrane segment spans residues 37-61 (FSALAAYMFFLILTGLPVNFLTLFV). Topologically, residues 62–73 (TIQHKKLRQPLN) are cytoplasmic. Residues 74–96 (YILLNLAVSDLFMVFGGFTTTII) form a helical membrane-spanning segment. Topologically, residues 97–110 (TSMNGYFIFGPAGC) are extracellular. A disulfide bond links C110 and C187. A helical membrane pass occupies residues 111-133 (NFEGFFATLGGEVGLWCLVVLAI). The short motif at 134–136 (ERY) is the 'Ionic lock' involved in activated form stabilization element. The Cytoplasmic portion of the chain corresponds to 134 to 152 (ERYMVVCKPMANFRFGSQH). Residues 153–173 (AIIGVVFTWIMALSCAGPPLV) form a helical membrane-spanning segment. Over 174–202 (GWSRYIPEGLQCSCGVDYYTMKPEVNNES) the chain is Extracellular. Residues 203–224 (FVIYMFVVHFTIPLIVIFFCYG) form a helical membrane-spanning segment. Residues 225–252 (RLVCTVKEAAAQQQESESTQRAEREVTR) are Cytoplasmic-facing. The helical transmembrane segment at 253-274 (MVIIMVVAFLICWVPYASVAFY) threads the bilayer. Topologically, residues 275–286 (IFINQGCDFTPF) are extracellular. A helical transmembrane segment spans residues 287–308 (FMTVPAFFAKSSAVYNPLIYIL). The residue at position 296 (K296) is an N6-(retinylidene)lysine. Over 309–354 (MNKQFRNCMITTICLGKNPFEEEESTSASASKTEASSVSSSQVAPA) the chain is Cytoplasmic. C322 is lipidated: S-palmitoyl cysteine. A disordered region spans residues 333–354 (STSASASKTEASSVSSSQVAPA). A compositionally biased stretch (low complexity) spans 334 to 354 (TSASASKTEASSVSSSQVAPA).

This sequence belongs to the G-protein coupled receptor 1 family. Opsin subfamily. In terms of processing, phosphorylated on some or all of the serine and threonine residues present in the C-terminal region. Post-translationally, contains one covalently linked retinal chromophore.

The protein resides in the membrane. It is found in the cell projection. Its subcellular location is the cilium. The protein localises to the photoreceptor outer segment. Photoreceptor required for image-forming vision at low light intensity. While most salt water fish species use retinal as chromophore, most freshwater fish use 3-dehydroretinal, or a mixture of retinal and 3-dehydroretinal. Light-induced isomerization of 11-cis to all-trans retinal triggers a conformational change that activates signaling via G-proteins. Subsequent receptor phosphorylation mediates displacement of the bound G-protein alpha subunit by arrestin and terminates signaling. This chain is Rhodopsin (rho), found in Leucoraja erinaceus (Little skate).